The primary structure comprises 506 residues: Aspartic proteinase A1 (506 aa).

The signal sequence occupies residues 1 to 24; the sequence is MKIYSRTVAVSLIVSFLLCFSAFA. Residues 25–64 constitute a propeptide, activation peptide; it reads ERNDGTFRVGLKKLKLDSKNRLAARVESKQEKPLRAYRLG. The Peptidase A1 domain maps to 82–503; it reads YYGEIAIGTP…DFGNEQVGFA (422 aa). Residue aspartate 100 is part of the active site. Cystine bridges form between cysteine 113–cysteine 119 and cysteine 278–cysteine 282. The active site involves aspartate 287. One can recognise a Saposin B-type domain in the interval 312–417; sequence VVSQQCKTVV…NELCERLPSP (106 aa). Intrachain disulfides connect cysteine 317-cysteine 411, cysteine 342-cysteine 383, cysteine 348-cysteine 380, and cysteine 425-cysteine 462. Asparagine 397 carries an N-linked (GlcNAc...) asparagine glycan.

This sequence belongs to the peptidase A1 family. In terms of tissue distribution, expressed in roots, leaves, stems, petals, carpels, seed pods and dry seeds.

The protein localises to the vacuole. Involved in the breakdown of propeptides of storage proteins in protein-storage vacuoles. Possesses aspartic protease activity in vitro. The chain is Aspartic proteinase A1 (APA1) from Arabidopsis thaliana (Mouse-ear cress).